We begin with the raw amino-acid sequence, 196 residues long: MYDYIKGTLVKITAKHIVIETNGLGYIVTVANPYSFSDQMNQTIQVYLHQVIRDDAHLLFGFHTEDEKEVFLKLISVSGIGPTTALAIVAVDDNQGLVAAIDNSDIKYLMKFPKIGKKTAQQMVLDLAGKFAELPAETTNTTANQTAGNQQLDEAMEALLALGYKSTELKKVKAFFEDTNETAEQYIKSALKMLMK.

The domain I stretch occupies residues 1-63; that stretch reads MYDYIKGTLV…DDAHLLFGFH (63 aa). Residues 64–142 are domain II; it reads TEDEKEVFLK…ELPAETTNTT (79 aa). Residues 143–146 form a flexible linker region; sequence ANQT. Residues 147 to 196 form a domain III region; that stretch reads AGNQQLDEAMEALLALGYKSTELKKVKAFFEDTNETAEQYIKSALKMLMK.

The protein belongs to the RuvA family. Homotetramer. Forms an RuvA(8)-RuvB(12)-Holliday junction (HJ) complex. HJ DNA is sandwiched between 2 RuvA tetramers; dsDNA enters through RuvA and exits via RuvB. An RuvB hexamer assembles on each DNA strand where it exits the tetramer. Each RuvB hexamer is contacted by two RuvA subunits (via domain III) on 2 adjacent RuvB subunits; this complex drives branch migration. In the full resolvosome a probable DNA-RuvA(4)-RuvB(12)-RuvC(2) complex forms which resolves the HJ.

The protein localises to the cytoplasm. In terms of biological role, the RuvA-RuvB-RuvC complex processes Holliday junction (HJ) DNA during genetic recombination and DNA repair, while the RuvA-RuvB complex plays an important role in the rescue of blocked DNA replication forks via replication fork reversal (RFR). RuvA specifically binds to HJ cruciform DNA, conferring on it an open structure. The RuvB hexamer acts as an ATP-dependent pump, pulling dsDNA into and through the RuvAB complex. HJ branch migration allows RuvC to scan DNA until it finds its consensus sequence, where it cleaves and resolves the cruciform DNA. The chain is Holliday junction branch migration complex subunit RuvA from Streptococcus thermophilus (strain CNRZ 1066).